Consider the following 557-residue polypeptide: Formate--tetrahydrofolate ligase (557 aa).

Thr-67–Ser-74 is a binding site for ATP.

It belongs to the formate--tetrahydrofolate ligase family.

It catalyses the reaction (6S)-5,6,7,8-tetrahydrofolate + formate + ATP = (6R)-10-formyltetrahydrofolate + ADP + phosphate. It participates in one-carbon metabolism; tetrahydrofolate interconversion. The polypeptide is Formate--tetrahydrofolate ligase (Latilactobacillus sakei subsp. sakei (strain 23K) (Lactobacillus sakei subsp. sakei)).